Consider the following 100-residue polypeptide: Urease subunit gamma (100 aa).

Belongs to the urease gamma subunit family. As to quaternary structure, heterotrimer of UreA (gamma), UreB (beta) and UreC (alpha) subunits. Three heterotrimers associate to form the active enzyme.

It is found in the cytoplasm. It catalyses the reaction urea + 2 H2O + H(+) = hydrogencarbonate + 2 NH4(+). It participates in nitrogen metabolism; urea degradation; CO(2) and NH(3) from urea (urease route): step 1/1. This is Urease subunit gamma from Cupriavidus pinatubonensis (strain JMP 134 / LMG 1197) (Cupriavidus necator (strain JMP 134)).